The following is a 418-amino-acid chain: Beta-arrestin-1 (418 aa).

The tract at residues 1-163 (MGDKGTRVFK…LEEKIHKRNS (163 aa)) is interaction with SRC. The tract at residues 45–86 (PEYLKERRVYVTLTCAFRYGREDLDVLGLTFRKDLFVANVQS) is interaction with CHRM2. Tyr47 is subject to Phosphotyrosine. The 1D-myo-inositol hexakisphosphate site is built by Lys250, Met255, Lys324, and Lys326. Residues 318–418 (IVSYKVKVKL…GTGSPHLNNR (101 aa)) are interaction with TRAF6. 2 disordered regions span residues 353 to 375 (HPKP…VDTN) and 397 to 418 (KGMK…LNNR). Residues 355-366 (KPKEEPPHREVP) show a composition bias toward basic and acidic residues. At Ser412 the chain carries Phosphoserine.

The protein belongs to the arrestin family. In terms of assembly, monomer. Homodimer. Homooligomer; the self-association is mediated by InsP6-binding. Heterooligomer with ARRB2; the association is mediated by InsP6-binding. Interacts with ADRB2 (phosphorylated). Interacts with CHRM2 (phosphorylated). Interacts with LHCGR. Interacts with CYTH2 and CASR. Interacts with AP2B1 (dephosphorylated); phosphorylation of AP2B1 disrupts the interaction. Interacts (dephosphorylated at Ser-412) with CLTC. Interacts with CCR2 and GRK2. Interacts with CRR5. Interacts with PTAFR (phosphorylated on serine residues). Interacts with CLTC and MAP2K3. Interacts with CREB1. Interacts with TRAF6. Interacts with IGF1R and MDM2. Interacts with C5AR1. Interacts with PDE4D. Interacts with SRC (via the SH3 domain and the protein kinase domain); the interaction is independent of the phosphorylation state of SRC C-terminus. Interacts with TACR1. Interacts with RAF1. Interacts with DVL1; the interaction is enhanced by phosphorylation of DVL1. Interacts with DVL2; the interaction is enhanced by phosphorylation of DVL2. Interacts with IGF1R. Interacts with CHUK, IKBKB and MAP3K14. Associates with MAP kinase p38. Part of a MAPK signaling complex consisting of TACR1, ARRB1, SRC, MAPK1 (activated) and MAPK3 (activated). Part of a MAPK signaling complex consisting of F2RL1, ARRB1, RAF1, MAPK1 (activated) and MAPK3 (activated). Interacts with GPR143. Interacts with MAP2K4/MKK4. Interacts with HCK and CXCR1 (phosphorylated). Interacts with ACKR3 and ACKR4. Interacts with ARRDC1; the interaction is direct. Interacts with GPR61, GPR62 and GPR135. In terms of processing, constitutively phosphorylated at in the cytoplasm. At the plasma membrane, is rapidly dephosphorylated, a process that is required for clathrin binding and ADRB2 endocytosis but not for ADRB2 binding and desensitization. Once internalized, is rephosphorylated. Post-translationally, the ubiquitination status appears to regulate the formation and trafficking of beta-arrestin-GPCR complexes and signaling. Ubiquitination appears to occur GPCR-specific. Ubiquitinated by MDM2; the ubiquitination is required for rapid internalization of ADRB2. Deubiquitinated by USP33; the deubiquitination leads to a dissociation of the beta-arrestin-GPCR complex. Stimulation of a class A GPCR, such as ADRB2, induces transient ubiquitination and subsequently promotes association with USP33.

The protein localises to the cytoplasm. It is found in the nucleus. The protein resides in the cell membrane. It localises to the membrane. Its subcellular location is the clathrin-coated pit. The protein localises to the cell projection. It is found in the pseudopodium. The protein resides in the cytoplasmic vesicle. Functions in regulating agonist-mediated G-protein coupled receptor (GPCR) signaling by mediating both receptor desensitization and resensitization processes. During homologous desensitization, beta-arrestins bind to the GPRK-phosphorylated receptor and sterically preclude its coupling to the cognate G-protein; the binding appears to require additional receptor determinants exposed only in the active receptor conformation. The beta-arrestins target many receptors for internalization by acting as endocytic adapters (CLASPs, clathrin-associated sorting proteins) and recruiting the GPRCs to the adapter protein 2 complex 2 (AP-2) in clathrin-coated pits (CCPs). However, the extent of beta-arrestin involvement appears to vary significantly depending on the receptor, agonist and cell type. Internalized arrestin-receptor complexes traffic to intracellular endosomes, where they remain uncoupled from G-proteins. Two different modes of arrestin-mediated internalization occur. Class A receptors, like ADRB2, OPRM1, ENDRA, D1AR and ADRA1B dissociate from beta-arrestin at or near the plasma membrane and undergo rapid recycling. Class B receptors, like AVPR2, AGTR1, NTSR1, TRHR and TACR1 internalize as a complex with arrestin and traffic with it to endosomal vesicles, presumably as desensitized receptors, for extended periods of time. Receptor resensitization then requires that receptor-bound arrestin is removed so that the receptor can be dephosphorylated and returned to the plasma membrane. Involved in internalization of P2RY4 and UTP-stimulated internalization of P2RY2. Involved in phosphorylation-dependent internalization of OPRD1 ands subsequent recycling. Involved in the degradation of cAMP by recruiting cAMP phosphodiesterases to ligand-activated receptors. Beta-arrestins function as multivalent adapter proteins that can switch the GPCR from a G-protein signaling mode that transmits short-lived signals from the plasma membrane via small molecule second messengers and ion channels to a beta-arrestin signaling mode that transmits a distinct set of signals that are initiated as the receptor internalizes and transits the intracellular compartment. Acts as a signaling scaffold for MAPK pathways such as MAPK1/3 (ERK1/2). ERK1/2 activated by the beta-arrestin scaffold is largely excluded from the nucleus and confined to cytoplasmic locations such as endocytic vesicles, also called beta-arrestin signalosomes. Recruits c-Src/SRC to ADRB2 resulting in ERK activation. GPCRs for which the beta-arrestin-mediated signaling relies on both ARRB1 and ARRB2 (codependent regulation) include ADRB2, F2RL1 and PTH1R. For some GPCRs the beta-arrestin-mediated signaling relies on either ARRB1 or ARRB2 and is inhibited by the other respective beta-arrestin form (reciprocal regulation). Inhibits ERK1/2 signaling in AGTR1- and AVPR2-mediated activation (reciprocal regulation). Is required for SP-stimulated endocytosis of NK1R and recruits c-Src/SRC to internalized NK1R resulting in ERK1/2 activation, which is required for the antiapoptotic effects of SP. Is involved in proteinase-activated F2RL1-mediated ERK activity. Acts as a signaling scaffold for the AKT1 pathway. Is involved in alpha-thrombin-stimulated AKT1 signaling. Is involved in IGF1-stimulated AKT1 signaling leading to increased protection from apoptosis. Involved in activation of the p38 MAPK signaling pathway and in actin bundle formation. Involved in F2RL1-mediated cytoskeletal rearrangement and chemotaxis. Involved in AGTR1-mediated stress fiber formation by acting together with GNAQ to activate RHOA. Appears to function as signaling scaffold involved in regulation of MIP-1-beta-stimulated CCR5-dependent chemotaxis. Involved in attenuation of NF-kappa-B-dependent transcription in response to GPCR or cytokine stimulation by interacting with and stabilizing CHUK. May serve as nuclear messenger for GPCRs. Involved in OPRD1-stimulated transcriptional regulation by translocating to CDKN1B and FOS promoter regions and recruiting EP300 resulting in acetylation of histone H4. Involved in regulation of LEF1 transcriptional activity via interaction with DVL1 and/or DVL2 Also involved in regulation of receptors other than GPCRs. Involved in Toll-like receptor and IL-1 receptor signaling through the interaction with TRAF6 which prevents TRAF6 autoubiquitination and oligomerization required for activation of NF-kappa-B and JUN. Involved in IL8-mediated granule release in neutrophils. Binds phosphoinositides. Binds inositolhexakisphosphate (InsP6). Required for atypical chemokine receptor ACKR2-induced RAC1-LIMK1-PAK1-dependent phosphorylation of cofilin (CFL1) and for the up-regulation of ACKR2 from endosomal compartment to cell membrane, increasing its efficiency in chemokine uptake and degradation. Involved in the internalization of the atypical chemokine receptor ACKR3. Negatively regulates the NOTCH signaling pathway by mediating the ubiquitination and degradation of NOTCH1 by ITCH. Participates in the recruitment of the ubiquitin-protein ligase to the receptor. This chain is Beta-arrestin-1 (Arrb1), found in Mus musculus (Mouse).